Consider the following 369-residue polypeptide: Glutamine synthetase (369 aa).

Residues 23–102 (VIAEYIWVDS…VLAECWNNDG (80 aa)) enclose the GS beta-grasp domain. The 261-residue stretch at 109-369 (HRHEAAKLFE…MSKEFERESS (261 aa)) folds into the GS catalytic domain.

It belongs to the glutamine synthetase family. As to quaternary structure, homooctamer.

The protein resides in the cytoplasm. The enzyme catalyses L-glutamate + NH4(+) + ATP = L-glutamine + ADP + phosphate + H(+). The protein is Glutamine synthetase (GLN1) of Eremothecium gossypii (strain ATCC 10895 / CBS 109.51 / FGSC 9923 / NRRL Y-1056) (Yeast).